The primary structure comprises 959 residues: Protein NLP7 (959 aa).

The disordered stretch occupies residues Met1–Glu22. Residues Ala9–Ser18 show a composition bias toward polar residues. The RWP-RK domain maps to Lys578–Gly659. The stretch at Ser633 to Gln654 forms a coiled coil. Composition is skewed to polar residues over residues Thr673–Gly687, Pro694–Trp703, and Gly735–Gly745. Residues Thr673 to Phe760 form a disordered region. One can recognise a PB1 domain in the interval Thr863–Val945.

In terms of assembly, interacts with NRG2. As to expression, expressed in roots, stems, leaves, flowers and siliques. Detected in root hairs, emerging secondary roots, vascular tissues, leaf parenchyma cells and stomata.

It localises to the nucleus. Functionally, transcription factor involved in regulation of nitrate assimilation and in transduction of the nitrate signal. This Arabidopsis thaliana (Mouse-ear cress) protein is Protein NLP7 (NLP7).